A 362-amino-acid chain; its full sequence is METIHVDLAERSYPISIGAELFCNPAHFSSVIPAKKRVVVISNVTVAPLYAQQIIDTLNTFECQVSLLELDDGEQYKNLDTFNQILTFLLEENHSRDVTIVALGGGVVGDVVGFASACYQRGVDFIQIPTTLLSQVDSSVGGKTAINHPLGKNMVGAFYQPKAVIIDINCLKTLPEREFAAGMAEVIKYGIIVDREFFDWLDENMDKLYALDHDALIYAISRCCQIKADVVAKDEKESGMRALLNLGHTFGHAIEAEMGYGNWLHGEAVSAGTVMAAVTAQKEGLISQSDVERICSILEKAKLPLKAPKEMTVDAFMKHMMRDKKVLSGKLRLVLPTSIGSSEVVTGVSESVLAEVIEQCKA.

NAD(+) contacts are provided by residues 72–77 (DGEQYK), 106–110 (GVVGD), 130–131 (TT), K143, K152, and 170–173 (CLKT). Positions 185, 248, and 265 each coordinate Zn(2+).

The protein belongs to the sugar phosphate cyclases superfamily. Dehydroquinate synthase family. Co(2+) is required as a cofactor. Zn(2+) serves as cofactor. The cofactor is NAD(+).

Its subcellular location is the cytoplasm. It carries out the reaction 7-phospho-2-dehydro-3-deoxy-D-arabino-heptonate = 3-dehydroquinate + phosphate. Its pathway is metabolic intermediate biosynthesis; chorismate biosynthesis; chorismate from D-erythrose 4-phosphate and phosphoenolpyruvate: step 2/7. Functionally, catalyzes the conversion of 3-deoxy-D-arabino-heptulosonate 7-phosphate (DAHP) to dehydroquinate (DHQ). This chain is 3-dehydroquinate synthase, found in Aliivibrio fischeri (strain ATCC 700601 / ES114) (Vibrio fischeri).